We begin with the raw amino-acid sequence, 1867 residues long: Probable serine/threonine-protein kinase roco8 (1867 aa).

In terms of domain architecture, DEP 1 spans 16 to 93 (SSDGLQIKDR…DDYIFYQFDN (78 aa)). Disordered stretches follow at residues 96 to 115 (NNNN…TTAT) and 121 to 225 (VSTK…NSFN). The span at 121-223 (VSTKIGSIGK…NSNSTYNSNS (103 aa)) shows a compositional bias: low complexity. Positions 264 to 342 (GDKGLKLQKK…NNNNGGGGVM (79 aa)) constitute a DEP 2 domain. 8 LRR repeats span residues 491-512 (RLDD…IINT), 515-536 (FLRI…ESIA), 540-561 (NLES…FSRL), 563-584 (LLTK…VFQL), 586-607 (NLEE…IGSL), 609-631 (SLEK…LGLL), 633-656 (RLKS…STLP), and 657-678 (LLEQ…ITSK). The Roc domain maps to 693–941 (GTETLSHIKL…NEIIQTLLNQ (249 aa)). Disordered stretches follow at residues 763-813 (QNGI…KKRP) and 942-961 (SNNN…KQSN). The segment covering 768 to 793 (TSSSNLNLSTGTLPPPTQLSSSTSEL) has biased composition (low complexity). Positions 974-1111 (PSIYITLETN…ILYTLKNNSN (138 aa)) constitute a COR domain. The disordered stretch occupies residues 1163–1207 (SPSLSLSNSSQSVFTNPNNNNNNKSEQQQQQQQQQQQPQPISTSP). Positions 1456–1864 (LIYQEEIGVG…TLNEIKDSTI (409 aa)) constitute a Protein kinase domain. ATP contacts are provided by residues 1462–1470 (IGVGGFSRV) and K1483. Residues 1509–1546 (SNSSLSISLSSSTSSLSPPIVNNNNNNNNLNNNLNNLN) are disordered. D1721 serves as the catalytic Proton acceptor.

It belongs to the protein kinase superfamily. TKL Ser/Thr protein kinase family. ROCO subfamily.

The catalysed reaction is L-seryl-[protein] + ATP = O-phospho-L-seryl-[protein] + ADP + H(+). The enzyme catalyses L-threonyl-[protein] + ATP = O-phospho-L-threonyl-[protein] + ADP + H(+). The sequence is that of Probable serine/threonine-protein kinase roco8 (roco8) from Dictyostelium discoideum (Social amoeba).